The primary structure comprises 44 residues: Metallothionein-4 (44 aa).

The protein belongs to the metallothionein superfamily. Type 5 family.

Its function is as follows. This protein binds cations of several transition elements. Thought to be involved in metal ion homeostasis. This chain is Metallothionein-4 (MtnD), found in Drosophila melanogaster (Fruit fly).